Here is a 362-residue protein sequence, read N- to C-terminus: Homeobox protein extradenticle (362 aa).

Residues 34–225 (PRKQDIGEIL…VMILRSRFLD (192 aa)) form the PBC domain. Residues 41–120 (EILQQIMNIT…EGVAGPEKGG (80 aa)) form a PBC-A region. The interval 123 to 225 (DFLSQSDLTG…VMILRSRFLD (103 aa)) is PBC-B. The segment at residues 226-288 (ARRKRRNFSK…NKRIRYKKNI (63 aa)) is a DNA-binding region (homeobox; TALE-type). Positions 305-362 (GASPYSMGGPPSGAATPMMSPAPAQDSMGYSLGSGGYDQQQPYDGSMGYDQLHQDLSP) are disordered.

Belongs to the TALE/PBX homeobox family.

It localises to the nucleus. Transcription factor which acts with the selector homeodomain proteins altering the regulation of downstream target genes such as wingless (wg), teashirt (tsh) and decapentaplegic (dpp), thus affecting segmental identity. The polypeptide is Homeobox protein extradenticle (Anopheles gambiae (African malaria mosquito)).